The chain runs to 503 residues: Probable cytosol aminopeptidase (503 aa).

Residues K274 and D279 each contribute to the Mn(2+) site. Residue K286 is part of the active site. 3 residues coordinate Mn(2+): D297, D356, and E358. Residue R360 is part of the active site.

This sequence belongs to the peptidase M17 family. It depends on Mn(2+) as a cofactor.

Its subcellular location is the cytoplasm. The enzyme catalyses Release of an N-terminal amino acid, Xaa-|-Yaa-, in which Xaa is preferably Leu, but may be other amino acids including Pro although not Arg or Lys, and Yaa may be Pro. Amino acid amides and methyl esters are also readily hydrolyzed, but rates on arylamides are exceedingly low.. It catalyses the reaction Release of an N-terminal amino acid, preferentially leucine, but not glutamic or aspartic acids.. Presumably involved in the processing and regular turnover of intracellular proteins. Catalyzes the removal of unsubstituted N-terminal amino acids from various peptides. In Burkholderia pseudomallei (strain 1106a), this protein is Probable cytosol aminopeptidase.